The sequence spans 783 residues: Rho GTPase-activating protein gacR (783 aa).

Residues 138 to 188 adopt a coiled-coil conformation; sequence AKNRFDKARLSFDEASEQFKQLRKKQNNINNEKLLEAEEDLDYATQQFSDI. A disordered region spans residues 262–299; it reads QFEQTNSSRTISLPPPPPPKPTSSTPSSSPSPSPSSSI. Positions 283-299 are enriched in low complexity; it reads TSSTPSSSPSPSPSSSI. In terms of domain architecture, Rho-GAP spans 319-509; that stretch reads MALSTITERE…FIISNFNNIF (191 aa). Residues 527–539 are compositionally biased toward gly residues; sequence GSSGGGGGGGSSG. Positions 527 to 745 are disordered; the sequence is GSSGGGGGGG…TTNSRPLSNS (219 aa). Composition is skewed to low complexity over residues 568-589, 599-630, 641-651, and 661-698; these read SVNT…ASSA, PSSS…NINP, PKKISSSSNSL, and SIPE…RSST. Over residues 706–738 the composition is skewed to polar residues; it reads NRVSMYLQNSNTGVPLPSQKPQRVISNNNTTTN.

The protein resides in the cytoplasm. Rho GTPase-activating protein involved in the signal transduction pathway. In Dictyostelium discoideum (Social amoeba), this protein is Rho GTPase-activating protein gacR (gacR).